A 250-amino-acid polypeptide reads, in one-letter code: Probable transcriptional regulatory protein tll0175 (250 aa).

The protein belongs to the TACO1 family.

The protein resides in the cytoplasm. This chain is Probable transcriptional regulatory protein tll0175, found in Thermosynechococcus vestitus (strain NIES-2133 / IAM M-273 / BP-1).